The chain runs to 106 residues: Neisseria hypothetical transcription factor (106 aa).

One can recognise an HTH cro/C1-type domain in the interval 26–80; that stretch reads MRLFRVNKGWSQEELARQCGLDRTYVSAVERKRWNIALSNIEKMAAALGVAAYQL. The segment at residues 37–56 is a DNA-binding region (H-T-H motif); sequence QEELARQCGLDRTYVSAVER.

Homodimer. Can interact with the dimeric form of the DNA mimic protein DMP19 with 1:1 stoichiometry.

The protein localises to the cytoplasm. With respect to regulation, repressor activity is inhibited in the presence of the DNA mimic protein DMP19, which interacts with NHTF and prevents binding of NHTF to its DNA-binding sites. Its function is as follows. Transcriptional regulator probably involved in the response to nitrogen levels. Down-regulates its own expression as well as the expression of the downstream gene, glnD, which encodes the [Protein-PII] uridylyltransferase, a key enzyme in the nitrogen regulation system. Acts by binding to a specific palindromic DNA sequence (5'-TGTNANTNACA-3') in its 5'-untranslated region. The sequence is that of Neisseria hypothetical transcription factor from Neisseria meningitidis serogroup B (strain ATCC BAA-335 / MC58).